The chain runs to 194 residues: Ion-translocating oxidoreductase complex subunit B (194 aa).

The hydrophobic stretch occupies residues 1 to 26 (MSSILIAVIAISALALVFGLILGFAS). One can recognise a 4Fe-4S domain in the interval 32–90 (ESDPIVDQIDSILPQTQCGQCGYPGCKPYAEAIANGDTINKCPPGGQATIEKLADLMGV). [4Fe-4S] cluster is bound by residues C49, C52, C57, C73, C114, C117, C120, C124, C144, C147, C150, and C154. 4Fe-4S ferredoxin-type domains are found at residues 105 to 134 (KIAF…GGTK) and 135 to 164 (ALHT…MIPV).

This sequence belongs to the 4Fe4S bacterial-type ferredoxin family. RnfB subfamily. As to quaternary structure, the complex is composed of six subunits: RnfA, RnfB, RnfC, RnfD, RnfE and RnfG. [4Fe-4S] cluster serves as cofactor.

The protein localises to the cell inner membrane. Part of a membrane-bound complex that couples electron transfer with translocation of ions across the membrane. This chain is Ion-translocating oxidoreductase complex subunit B, found in Aliivibrio salmonicida (strain LFI1238) (Vibrio salmonicida (strain LFI1238)).